The primary structure comprises 400 residues: Signal recognition particle receptor FtsY (400 aa).

2 disordered regions span residues 12–37 (TKKTNQVEQDEPILDQQDQQDQQEEQ) and 51–86 (NKIKKTKTSETKKQEKPIETLKEKKKREKQKEKDKK). Residues 51–72 (NKIKKTKTSETKKQEKPIETLK) show a composition bias toward basic and acidic residues. Residues 192 to 199 (GVNGTGKT), 278 to 282 (DTAGR), and 342 to 345 (TKMD) each bind GTP.

Belongs to the GTP-binding SRP family. FtsY subfamily. In terms of assembly, part of the signal recognition particle protein translocation system, which is composed of SRP and FtsY.

It localises to the cell membrane. The protein localises to the cytoplasm. The enzyme catalyses GTP + H2O = GDP + phosphate + H(+). In terms of biological role, involved in targeting and insertion of nascent membrane proteins into the cytoplasmic membrane. Acts as a receptor for the complex formed by the signal recognition particle (SRP) and the ribosome-nascent chain (RNC). This chain is Signal recognition particle receptor FtsY, found in Mycoplasma mycoides subsp. mycoides SC (strain CCUG 32753 / NCTC 10114 / PG1).